A 99-amino-acid chain; its full sequence is Small integral membrane protein 14 (99 aa).

The Lumenal portion of the chain corresponds to 1–49 (MAEGGFDPCECICSHEHAMRRLINLLRQSQSYCTDTECLRELPGPSGDS). Residues 50 to 70 (GISITVILMAWMVIAVLLFLL) form a helical membrane-spanning segment. At 71 to 99 (RPPNLRGSSLPGKPSSPHSGQDPPAPPVD) the chain is on the cytoplasmic side. A disordered region spans residues 77–99 (GSSLPGKPSSPHSGQDPPAPPVD).

Its subcellular location is the endoplasmic reticulum membrane. This Rattus norvegicus (Rat) protein is Small integral membrane protein 14 (Smim14).